We begin with the raw amino-acid sequence, 305 residues long: Alpha-N-acetylgalactosaminide alpha-2,6-sialyltransferase 3 (305 aa).

The Cytoplasmic portion of the chain corresponds to 1 to 8; sequence MACILKRK. Residues 9–28 traverse the membrane as a helical; Signal-anchor for type II membrane protein segment; the sequence is PVLVVSFIALCILLLAMRLV. Residues 29–305 are Lumenal-facing; that stretch reads NDATFPLLLN…VFTHPNWTLS (277 aa). C80 and C229 are oxidised to a cystine. Residues N239 and N301 are each glycosylated (N-linked (GlcNAc...) asparagine).

This sequence belongs to the glycosyltransferase 29 family. In terms of tissue distribution, in adult tissues, high expression in brain, lung and heart and to a lesser extent in kidney, mammary gland, spleen, testis and thymus.

It is found in the golgi apparatus membrane. It catalyses the reaction an alpha-Neu5Ac-(2-&gt;3)-beta-D-Gal-(1-&gt;3)-D-GlcNAc derivative + CMP-N-acetyl-beta-neuraminate = an alpha-Neu5Ac-(2-&gt;3)-beta-D-Gal-(1-&gt;3)-[alpha-Neu5Ac-(2-&gt;6)]-D-GlcNAc derivative + CMP + H(+). It carries out the reaction a ganglioside GM1b (d18:1(4E)) + CMP-N-acetyl-beta-neuraminate = a ganglioside GD1alpha (d18:1(4E)) + CMP + H(+). The enzyme catalyses a globoside MSGG + CMP-N-acetyl-beta-neuraminate = a globoside DSGG + CMP + H(+). The catalysed reaction is 3-O-[alpha-Neu5Ac-(2-&gt;3)-beta-D-Gal-(1-&gt;3)-alpha-D-GalNAc]-L-Ser-[protein] + CMP-N-acetyl-beta-neuraminate = a 3-O-{alpha-Neu5Ac-(2-&gt;3)-beta-D-Gal-(1-&gt;3)-[alpha-Neu5Ac-(2-&gt;6)]-alpha-D-GalNAc}-L-seryl-[protein] + CMP + H(+). It catalyses the reaction 3-O-[alpha-Neu5Ac-(2-&gt;3)-beta-D-Gal-(1-&gt;3)-alpha-D-GalNAc]-L-Thr-[protein] + CMP-N-acetyl-beta-neuraminate = a 3-O-{alpha-Neu5Ac-(2-&gt;3)-beta-D-Gal-(1-&gt;3)-[alpha-Neu5Ac-(2-&gt;6)]-alpha-D-GalNAc}-L-threonyl-[protein] + CMP + H(+). Its pathway is protein modification; protein glycosylation. The protein operates within glycolipid biosynthesis. In terms of biological role, transfers the sialyl group (N-acetyl-alpha-neuraminyl or NeuAc) from CMP-NeuAc to the GalNAc residue on the NeuAc-alpha-2,3-Gal-beta-1,3-GalNAc sequence of glycoproteins and glycolipids forming an alpha-2,6-linkage. Produces branched type disialyl structures by transfer of a sialyl group onto a GalNAc residue inside the backbone core chains. ST6GalNAcIII prefers glycolipids to glycoproteins, predominantly catalyzing the biosynthesis of ganglioside GD1alpha from GM1b. GD1alpha is a critical molecule in the communication and interaction between neuronal cells and their supportive cells, particularly in brain tissues, and functions as an adhesion molecule in the process of metastasis. Sialylation of glycoproteins or glycosphingolipids is very important in tumor development, neuronal development, nerve repair, immunological processes and regulation of hormone sensitivity. This Mus musculus (Mouse) protein is Alpha-N-acetylgalactosaminide alpha-2,6-sialyltransferase 3 (St6galnac3).